We begin with the raw amino-acid sequence, 370 residues long: GTPase Obg (370 aa).

In terms of domain architecture, Obg spans 1–159; sequence MKFIDEARIE…RMLRLELKVL (159 aa). The segment at 127 to 146 is disordered; that stretch reads NLHFKSSTNRAPRQKTDGKP. In terms of domain architecture, OBG-type G spans 160–334; it reads ADVGLLGMPN…LCYAIYDYLA (175 aa). GTP contacts are provided by residues 166 to 173, 191 to 195, 213 to 216, 284 to 287, and 315 to 317; these read GMPNAGKS, FTTLA, DIPG, NKLD, and SAL. Mg(2+) contacts are provided by serine 173 and threonine 193.

The protein belongs to the TRAFAC class OBG-HflX-like GTPase superfamily. OBG GTPase family. As to quaternary structure, monomer. Mg(2+) is required as a cofactor.

The protein localises to the cytoplasm. Its function is as follows. An essential GTPase which binds GTP, GDP and possibly (p)ppGpp with moderate affinity, with high nucleotide exchange rates and a fairly low GTP hydrolysis rate. Plays a role in control of the cell cycle, stress response, ribosome biogenesis and in those bacteria that undergo differentiation, in morphogenesis control. In Burkholderia lata (strain ATCC 17760 / DSM 23089 / LMG 22485 / NCIMB 9086 / R18194 / 383), this protein is GTPase Obg.